The sequence spans 209 residues: Pyroglutamyl-peptidase 1 (209 aa).

Residues Glu85, Cys149, and His168 contribute to the active site.

The protein belongs to the peptidase C15 family. In terms of assembly, monomer.

It localises to the cytoplasm. The enzyme catalyses Release of an N-terminal pyroglutamyl group from a polypeptide, the second amino acid generally not being Pro.. Its activity is regulated as follows. Inhibited by transition metal ions including Ni(2+), Zn(2+), and Cu(2+) and by sulfhydryl-blocking agents. In terms of biological role, removes 5-oxoproline from various penultimate amino acid residues except L-proline. The sequence is that of Pyroglutamyl-peptidase 1 (PGPEP1) from Homo sapiens (Human).